A 346-amino-acid chain; its full sequence is tRNA(Ile)-lysidine synthase (346 aa).

Position 32–37 (32–37 (SGGPDS)) interacts with ATP.

This sequence belongs to the tRNA(Ile)-lysidine synthase family.

The protein resides in the cytoplasm. It carries out the reaction cytidine(34) in tRNA(Ile2) + L-lysine + ATP = lysidine(34) in tRNA(Ile2) + AMP + diphosphate + H(+). In terms of biological role, ligates lysine onto the cytidine present at position 34 of the AUA codon-specific tRNA(Ile) that contains the anticodon CAU, in an ATP-dependent manner. Cytidine is converted to lysidine, thus changing the amino acid specificity of the tRNA from methionine to isoleucine. In Rhodopseudomonas palustris (strain ATCC BAA-98 / CGA009), this protein is tRNA(Ile)-lysidine synthase.